A 2005-amino-acid chain; its full sequence is Sodium channel protein type 2 subunit alpha (2005 aa).

The Cytoplasmic segment spans residues 1–129; sequence MARSVLVPPG…KLAIKILVHS (129 aa). At S4 the chain carries Phosphoserine. The interval 28–61 is disordered; that stretch reads RIAEEKAKRPKQERKDEDDENGPKPNSDLEAGKS. Residue K38 forms a Glycyl lysine isopeptide (Lys-Gly) (interchain with G-Cter in SUMO1) linkage. An I repeat occupies 111 to 456; it reads ILTPFNPIRK…QQMLEQLKKQ (346 aa). A helical transmembrane segment spans residues 130–148; the sequence is LFNVLIMCTILTNCVFMTM. Over 149–155 the chain is Extracellular; sequence SNPPDWT. Residues 156–176 traverse the membrane as a helical segment; it reads KNVEYTFTGIYTFESLIKILA. At 177–190 the chain is on the cytoplasmic side; it reads RGFCLEDFTFLRNP. The chain crosses the membrane as a helical span at residues 191-208; it reads WNWLDFTVITFAYVTEFV. At 209-214 the chain is on the extracellular side; sequence NLGNVS. Residue N212 is glycosylated (N-linked (GlcNAc...) asparagine). Residues 215–231 traverse the membrane as a helical segment; sequence ALRTFRVLRALKTISVI. The Cytoplasmic segment spans residues 232 to 250; that stretch reads PGLKTIVGALIQSVKKLSD. The chain crosses the membrane as a helical span at residues 251 to 270; the sequence is VMILTVFCLSVFALIGLQLF. At 271-369 the chain is on the extracellular side; it reads MGNLRNKCLQ…PNYGYTSFDT (99 aa). Residues C278 and C338 are joined by a disulfide bond. Residues N285, N291, N297, N303, N308, and N340 are each glycosylated (N-linked (GlcNAc...) asparagine). Positions 370 to 394 form an intramembrane region, pore-forming; sequence FSWAFLSLFRLMTQDFWENLYQLTL. Topologically, residues 395-401 are extracellular; sequence RAAGKTY. A helical transmembrane segment spans residues 402 to 422; it reads MIFFVLVIFLGSFYLINLILA. Over 423–759 the chain is Cytoplasmic; that stretch reads VVAMAYEEQN…HVVNLVVMDP (337 aa). Phosphoserine is present on residues S468, S471, S484, S526, S528, S531, S553, S554, and S558. The segment at 494–529 is disordered; the sequence is SSKSEKELKNRRKKKKQKEQAGEEEKEDAVRKSASE. A compositionally biased stretch (basic and acidic residues) spans 511–529; the sequence is KEQAGEEEKEDAVRKSASE. S554 is subject to Phosphoserine; by PKC; in vitro. S573 and S576 each carry phosphoserine; by PKC; in vitro. Residues S589, S610, S623, S687, S688, and S721 each carry the phosphoserine modification. Positions 591–634 are disordered; that stretch reads NDFADDEHSTFEDNDSRRDSLFVPHRHGERRPSNVSQASRASRG. Residues 596–610 are compositionally biased toward basic and acidic residues; it reads DEHSTFEDNDSRRDS. An II repeat occupies 741–1013; sequence CCKPWLKVKH…QIAVGRMQKG (273 aa). The helical transmembrane segment at 760-778 threads the bilayer; the sequence is FVDLAITICIVLNTLFMAM. Residues 779-789 lie on the Extracellular side of the membrane; sequence EHYPMTEQFSS. A helical membrane pass occupies residues 790–809; it reads VLSVGNLVFTGIFTAEMFLK. The Cytoplasmic portion of the chain corresponds to 810 to 823; the sequence is IIAMDPYYYFQEGW. A helical membrane pass occupies residues 824 to 843; it reads NIFDGFIVSLSLMELGLANV. The Extracellular portion of the chain corresponds to 844–845; it reads EG. A helical membrane pass occupies residues 846 to 863; the sequence is LSVLRSFRLLRVFKLAKS. The Cytoplasmic portion of the chain corresponds to 864-879; the sequence is WPTLNMLIKIIGNSVG. A helical transmembrane segment spans residues 880–898; the sequence is ALGNLTLVLAIIVFIFAVV. At 899–927 the chain is on the extracellular side; the sequence is GMQLFGKSYKECVCKISNDCELPRWHMHH. Residues C912 and C918 are joined by a disulfide bond. The binds SCN2B stretch occupies residues 917 to 918; the sequence is DC. The segment at residues 928-948 is an intramembrane region (pore-forming); the sequence is FFHSFLIVFRVLCGEWIETMW. Over 949 to 961 the chain is Extracellular; sequence DCMEVAGQTMCLT. C950 and C959 are joined by a disulfide. The helical transmembrane segment at 962–982 threads the bilayer; that stretch reads VFMMVMVIGNLVVLNLFLALL. Residues 983 to 1209 are Cytoplasmic-facing; the sequence is LSSFSSDNLA…TCYKIVEHNW (227 aa). The segment at 1120–1166 is disordered; that stretch reads EEFSSESDMEESKEKLNATSSSEGSTVDIGAPAEGEQPEAEPEESLE. Residues 1155-1166 show a composition bias toward acidic residues; that stretch reads EQPEAEPEESLE. An III repeat occupies 1190–1504; that stretch reads KGKLWWNLRK…KKYYNAMKKL (315 aa). Residues 1210-1227 form a helical membrane-spanning segment; sequence FETFIVFMILLSSGALAF. The Extracellular portion of the chain corresponds to 1228–1240; that stretch reads EDIYIEQRKTIKT. The helical transmembrane segment at 1241 to 1259 threads the bilayer; it reads MLEYADKVFTYIFILEMLL. Residues 1260–1273 are Cytoplasmic-facing; that stretch reads KWVAYGFQMYFTNA. Residues 1274–1292 traverse the membrane as a helical segment; sequence WCWLDFLIVDVSLVSLTAN. Residues 1293–1300 lie on the Extracellular side of the membrane; it reads ALGYSELG. A helical membrane pass occupies residues 1301–1319; that stretch reads AIKSLRTLRALRPLRALSR. Residues 1320 to 1336 are Cytoplasmic-facing; that stretch reads FEGMRVVVNALLGAIPS. A helical membrane pass occupies residues 1337–1356; the sequence is IMNVLLVCLIFWLIFSIMGV. Residues 1357 to 1408 are Extracellular-facing; sequence NLFAGKFYHCINYTTGEMFDVSVVNNYSECQALIESNQTARWKNVKVNFDNV. C1366 and C1386 are joined by a disulfide. N-linked (GlcNAc...) asparagine glycans are attached at residues N1368, N1382, and N1393. Positions 1409–1430 form an intramembrane region, pore-forming; that stretch reads GLGYLSLLQVATFKGWMDIMYA. Topologically, residues 1431-1447 are extracellular; the sequence is AVDSRNVELQPKYEDNL. The chain crosses the membrane as a helical span at residues 1448-1469; that stretch reads YMYLYFVIFIIFGSFFTLNLFI. The Cytoplasmic segment spans residues 1470-1532; it reads GVIIDNFNQQ…MVFDFVTKQV (63 aa). At S1506 the chain carries Phosphoserine; by PKC. The IV repeat unit spans residues 1513 to 1811; it reads IPRPANKFQG…WEKFDPDATQ (299 aa). Residues 1533 to 1550 traverse the membrane as a helical segment; that stretch reads FDISIMILICLNMVTMMV. Residues 1551–1561 are Extracellular-facing; sequence ETDDQSQEMTN. Residues 1562–1580 traverse the membrane as a helical segment; sequence ILYWINLVFIVLFTGECVL. Residues 1581–1592 lie on the Cytoplasmic side of the membrane; that stretch reads KLISLRHYYFTI. A helical membrane pass occupies residues 1593-1610; sequence GWNIFDFVVVILSIVGMF. At 1611–1623 the chain is on the extracellular side; it reads LAELIEKYFVSPT. A helical membrane pass occupies residues 1624 to 1640; that stretch reads LFRVIRLARIGRILRLI. At 1641 to 1659 the chain is on the cytoplasmic side; the sequence is KGAKGIRTLLFALMMSLPA. Residues 1660–1677 traverse the membrane as a helical segment; that stretch reads LFNIGLLLFLVMFIYAIF. The Extracellular segment spans residues 1678–1699; sequence GMSNFAYVKREVGIDDMFNFET. The segment at residues 1700–1722 is an intramembrane region (pore-forming); sequence FGNSMICLFQITTSAGWDGLLAP. The Extracellular segment spans residues 1723–1752; the sequence is ILNSGPPDCDPEKDHPGSSVKGDCGNPSVG. A disulfide bridge connects residues C1731 and C1746. Residues 1753 to 1775 traverse the membrane as a helical segment; it reads IFFFVSYIIISFLVVVNMYIAVI. The Cytoplasmic portion of the chain corresponds to 1776 to 2005; the sequence is LENFSVATEE…KGKDIRESKK (230 aa). Residues 1905–1934 form the IQ domain; that stretch reads EEVSAIVIQRAYRRYLLKQKVKKVSSIYKK. S1930 carries the phosphoserine modification. Residues 1933–1964 are compositionally biased toward basic and acidic residues; it reads KKDKGKEDEGTPIKEDIITDKLNENSTPEKTD. The tract at residues 1933–2005 is disordered; it reads KKDKGKEDEG…KGKDIRESKK (73 aa). Phosphothreonine occurs at positions 1943, 1963, and 1966. S1971 is modified (phosphoserine). The span at 1979–2005 shows a compositional bias: basic and acidic residues; sequence TKPEKEKFEKDKSEKEDKGKDIRESKK.

This sequence belongs to the sodium channel (TC 1.A.1.10) family. Nav1.2/SCN2A subfamily. Heterooligomer of a large alpha subunit and a smaller beta subunit. Heterooligomer with SCN2B or SCN4B; disulfide-linked. Heterooligomer with SCN1B or SCN3B; non-covalently linked. Interacts with NEDD4L. Interacts with CALM. Interacts with TMEM233. Interacts with the conotoxin GVIIJ. Interacts with the scorpion toxin BMK M1. May be ubiquitinated by NEDD4L; which would promote its endocytosis. Post-translationally, phosphorylation at Ser-1506 by PKC in a highly conserved cytoplasmic loop slows inactivation of the sodium channel and reduces peak sodium currents. In terms of processing, sumoylated at Lys-38. Sumoylation is induced by hypoxia, increases voltage-gated sodium current and mediates the early response to acute hypoxia in neurons. Sumoylated SCN2A is located at the cell membrane. Expressed in brain (at protein level). Expressed in cerebellar granule neurons (at protein level).

It is found in the cell membrane. The enzyme catalyses Na(+)(in) = Na(+)(out). Mediates the voltage-dependent sodium ion permeability of excitable membranes. Assuming opened or closed conformations in response to the voltage difference across the membrane, the protein forms a sodium-selective channel through which Na(+) ions may pass in accordance with their electrochemical gradient. Implicated in the regulation of hippocampal replay occurring within sharp wave ripples (SPW-R) important for memory. In Rattus norvegicus (Rat), this protein is Sodium channel protein type 2 subunit alpha.